We begin with the raw amino-acid sequence, 418 residues long: Triacylglycerol lipase 2 (418 aa).

The first 31 residues, 1–31 (MAGSVMVPSVSIGLALSVLIFFALSLKTLEA), serve as a signal peptide directing secretion. N-linked (GlcNAc...) asparagine glycosylation occurs at N158. Residue S190 is the Nucleophile of the active site. Residues N286 and N342 are each glycosylated (N-linked (GlcNAc...) asparagine). Active-site charge relay system residues include D360 and H393.

Belongs to the AB hydrolase superfamily. Lipase family.

It localises to the secreted. The enzyme catalyses a triacylglycerol + H2O = a diacylglycerol + a fatty acid + H(+). Its function is as follows. Triacylglycerol (TAG) lipase. May be involved for TAG storage breakdown during seed germination. The sequence is that of Triacylglycerol lipase 2 (LIP2) from Arabidopsis thaliana (Mouse-ear cress).